Consider the following 361-residue polypeptide: 24-methylenesterol C-methyltransferase 2 (361 aa).

The protein belongs to the class I-like SAM-binding methyltransferase superfamily. Erg6/SMT family.

It catalyses the reaction 24-methylidenelophenol + S-adenosyl-L-methionine = (Z)-24-ethylidenelophenol + S-adenosyl-L-homocysteine + H(+). Its pathway is steroid biosynthesis; sterol biosynthesis. Its function is as follows. Catalyzes the methyl transfer from S-adenosyl-methionine to the methylene group of 24-methylene lophenol to form 24-ethylidene lophenol. This chain is 24-methylenesterol C-methyltransferase 2 (SMT2), found in Arabidopsis thaliana (Mouse-ear cress).